The primary structure comprises 489 residues: Betaine aldehyde dehydrogenase (489 aa).

Residue N93 coordinates K(+). 150-152 contacts NAD(+); the sequence is GAW. The active-site Charge relay system is the K162. 176–179 serves as a coordination point for NAD(+); that stretch reads KPSE. K(+) is bound at residue V180. NAD(+) is bound at residue 229–232; the sequence is EVGT. Residue L245 coordinates K(+). Residue E251 is the Proton acceptor of the active site. NAD(+) is bound by residues G253, C285, and E386. The active-site Nucleophile is C285. C285 carries the cysteine sulfenic acid (-SOH) modification. Residues K456 and G459 each coordinate K(+). The active-site Charge relay system is the E463.

It belongs to the aldehyde dehydrogenase family. As to quaternary structure, dimer of dimers. Requires K(+) as cofactor.

It catalyses the reaction betaine aldehyde + NAD(+) + H2O = glycine betaine + NADH + 2 H(+). It functions in the pathway amine and polyamine biosynthesis; betaine biosynthesis via choline pathway; betaine from betaine aldehyde: step 1/1. Its function is as follows. Involved in the biosynthesis of the osmoprotectant glycine betaine. Catalyzes the irreversible oxidation of betaine aldehyde to the corresponding acid. The sequence is that of Betaine aldehyde dehydrogenase from Chromohalobacter salexigens (strain ATCC BAA-138 / DSM 3043 / CIP 106854 / NCIMB 13768 / 1H11).